The chain runs to 518 residues: Homoserine O-acetyltransferase (518 aa).

Residues 69–468 enclose the AB hydrolase-1 domain; sequence NVMVICHALT…DSPEGHDAFL (400 aa). Ser-182 is an active-site residue. Ser-182 acts as the Nucleophile in catalysis. Residues 267 to 365 are disordered; sequence RFGRNIPDPS…PNSVSDPFRP (99 aa). A compositionally biased stretch (basic and acidic residues) spans 290–303; it reads PAEEHYDIHNEGFR. Positions 310–341 are enriched in low complexity; that stretch reads RSSTTTSDAPPSPTRTSSTSSTDAITPASTTP. Residues Asp-435 and His-464 contribute to the active site.

Belongs to the AB hydrolase superfamily. MetX family.

The enzyme catalyses L-homoserine + acetyl-CoA = O-acetyl-L-homoserine + CoA. The protein operates within amino-acid biosynthesis; L-methionine biosynthesis via de novo pathway; O-acetyl-L-homoserine from L-homoserine: step 1/1. Its function is as follows. Commits homoserine to the methionine biosynthesis pathway by catalyzing its O-acetylation. The protein is Homoserine O-acetyltransferase (MET2) of Ascobolus immersus.